Here is a 195-residue protein sequence, read N- to C-terminus: Large ribosomal subunit protein eL6 (195 aa).

2 positions are modified to phosphoserine: Ser-105 and Ser-115.

Belongs to the eukaryotic ribosomal protein eL6 family. Component of the large ribosomal subunit (LSU). Mature yeast ribosomes consist of a small (40S) and a large (60S) subunit. The 40S small subunit contains 1 molecule of ribosomal RNA (18S rRNA) and at least 33 different proteins. The large 60S subunit contains 3 rRNA molecules (25S, 5.8S and 5S rRNA) and at least 46 different proteins.

It localises to the cytoplasm. Its subcellular location is the nucleus. The protein resides in the nucleolus. Functionally, component of the ribosome, a large ribonucleoprotein complex responsible for the synthesis of proteins in the cell. The small ribosomal subunit (SSU) binds messenger RNAs (mRNAs) and translates the encoded message by selecting cognate aminoacyl-transfer RNA (tRNA) molecules. The large subunit (LSU) contains the ribosomal catalytic site termed the peptidyl transferase center (PTC), which catalyzes the formation of peptide bonds, thereby polymerizing the amino acids delivered by tRNAs into a polypeptide chain. The nascent polypeptides leave the ribosome through a tunnel in the LSU and interact with protein factors that function in enzymatic processing, targeting, and the membrane insertion of nascent chains at the exit of the ribosomal tunnel. The chain is Large ribosomal subunit protein eL6 (rpl6) from Schizosaccharomyces pombe (strain 972 / ATCC 24843) (Fission yeast).